The primary structure comprises 258 residues: UPF0246 protein CJA_0191 (258 aa).

Belongs to the UPF0246 family.

This chain is UPF0246 protein CJA_0191, found in Cellvibrio japonicus (strain Ueda107) (Pseudomonas fluorescens subsp. cellulosa).